Consider the following 474-residue polypeptide: Bifunctional protein HldE (474 aa).

Residues 1 to 318 are ribokinase; it reads MKLSMPRFDQ…RAVQREQGSE (318 aa). Position 194 to 197 (194 to 197) interacts with ATP; that stretch reads NLSE. The active site involves aspartate 263. A cytidylyltransferase region spans residues 343–474; the sequence is FTNGCFDILH…AIVEKIRQKG (132 aa).

The protein in the N-terminal section; belongs to the carbohydrate kinase PfkB family. It in the C-terminal section; belongs to the cytidylyltransferase family. As to quaternary structure, homodimer.

The enzyme catalyses D-glycero-beta-D-manno-heptose 7-phosphate + ATP = D-glycero-beta-D-manno-heptose 1,7-bisphosphate + ADP + H(+). It carries out the reaction D-glycero-beta-D-manno-heptose 1-phosphate + ATP + H(+) = ADP-D-glycero-beta-D-manno-heptose + diphosphate. It functions in the pathway nucleotide-sugar biosynthesis; ADP-L-glycero-beta-D-manno-heptose biosynthesis; ADP-L-glycero-beta-D-manno-heptose from D-glycero-beta-D-manno-heptose 7-phosphate: step 1/4. The protein operates within nucleotide-sugar biosynthesis; ADP-L-glycero-beta-D-manno-heptose biosynthesis; ADP-L-glycero-beta-D-manno-heptose from D-glycero-beta-D-manno-heptose 7-phosphate: step 3/4. In terms of biological role, catalyzes the phosphorylation of D-glycero-D-manno-heptose 7-phosphate at the C-1 position to selectively form D-glycero-beta-D-manno-heptose-1,7-bisphosphate. Catalyzes the ADP transfer from ATP to D-glycero-beta-D-manno-heptose 1-phosphate, yielding ADP-D-glycero-beta-D-manno-heptose. In Pseudomonas paraeruginosa (strain DSM 24068 / PA7) (Pseudomonas aeruginosa (strain PA7)), this protein is Bifunctional protein HldE.